We begin with the raw amino-acid sequence, 458 residues long: UDP-N-acetylmuramate--L-alanine ligase (458 aa).

115 to 121 (GSHGKTT) is an ATP binding site.

It belongs to the MurCDEF family.

The protein resides in the cytoplasm. It catalyses the reaction UDP-N-acetyl-alpha-D-muramate + L-alanine + ATP = UDP-N-acetyl-alpha-D-muramoyl-L-alanine + ADP + phosphate + H(+). It participates in cell wall biogenesis; peptidoglycan biosynthesis. Cell wall formation. In Anaeromyxobacter dehalogenans (strain 2CP-1 / ATCC BAA-258), this protein is UDP-N-acetylmuramate--L-alanine ligase.